A 146-amino-acid polypeptide reads, in one-letter code: Hemoglobin subunit beta (146 aa).

Residues Gln2–His146 form the Globin domain. His63 and His92 together coordinate heme b.

The protein belongs to the globin family. As to quaternary structure, heterotetramer of two alpha chains and two beta chains. As to expression, red blood cells.

Functionally, involved in oxygen transport from the lung to the various peripheral tissues. In Struthio camelus (Common ostrich), this protein is Hemoglobin subunit beta (HBB).